We begin with the raw amino-acid sequence, 427 residues long: 3-phosphoshikimate 1-carboxyvinyltransferase (427 aa).

3 residues coordinate 3-phosphoshikimate: K22, S23, and R27. K22 contributes to the phosphoenolpyruvate binding site. Positions 96 and 124 each coordinate phosphoenolpyruvate. S169, S170, Q171, S197, D313, N336, and K340 together coordinate 3-phosphoshikimate. Residue Q171 participates in phosphoenolpyruvate binding. D313 serves as the catalytic Proton acceptor. Positions 344, 386, and 411 each coordinate phosphoenolpyruvate.

The protein belongs to the EPSP synthase family. In terms of assembly, monomer.

Its subcellular location is the cytoplasm. It catalyses the reaction 3-phosphoshikimate + phosphoenolpyruvate = 5-O-(1-carboxyvinyl)-3-phosphoshikimate + phosphate. The protein operates within metabolic intermediate biosynthesis; chorismate biosynthesis; chorismate from D-erythrose 4-phosphate and phosphoenolpyruvate: step 6/7. Its function is as follows. Catalyzes the transfer of the enolpyruvyl moiety of phosphoenolpyruvate (PEP) to the 5-hydroxyl of shikimate-3-phosphate (S3P) to produce enolpyruvyl shikimate-3-phosphate and inorganic phosphate. The protein is 3-phosphoshikimate 1-carboxyvinyltransferase of Klebsiella pneumoniae (strain 342).